The sequence spans 477 residues: Enolase 1, chloroplastic (477 aa).

A chloroplast-targeting transit peptide spans 1–41 (MALTTKPHHLQRSFLSPSRVSGERYLESAPSCLRFRRSGVQ). His203 and Glu212 together coordinate substrate. Glu255 acts as the Proton donor in catalysis. Positions 290, 340, and 365 each coordinate Mg(2+). Glu340 and Asp365 together coordinate substrate. Lys390 functions as the Proton acceptor in the catalytic mechanism. Substrate is bound by residues 417 to 420 (SHRS) and Lys441. Ser476 is subject to Phosphoserine.

The protein belongs to the enolase family. Mg(2+) serves as cofactor. As to expression, highly expressed in young roots, young siliques, and shoot apex. Lowly expressed in young leaves, stems and cotyledons.

It is found in the plastid. Its subcellular location is the chloroplast. It carries out the reaction (2R)-2-phosphoglycerate = phosphoenolpyruvate + H2O. It functions in the pathway carbohydrate degradation; glycolysis; pyruvate from D-glyceraldehyde 3-phosphate: step 4/5. This is Enolase 1, chloroplastic (ENO1) from Arabidopsis thaliana (Mouse-ear cress).